A 160-amino-acid polypeptide reads, in one-letter code: UPF0225 protein CGSHiGG_04185 (160 aa).

It belongs to the UPF0225 family.

The sequence is that of UPF0225 protein CGSHiGG_04185 from Haemophilus influenzae (strain PittGG).